Here is a 112-residue protein sequence, read N- to C-terminus: Carboxysome shell protein CcmK4 (112 aa).

A BMC domain is found at 6 to 92 (AVGSIETIGF…PHENVVAVLP (87 aa)).

The protein belongs to the bacterial microcompartments protein family. CcmK subfamily. In terms of assembly, homohexamer. Interacts with full-length CcmM. Forms mixed heterohexamers with CcmK3, probably with 1:5 CcmK3:CcmK4 stoichiometry. Only very weak interactions with CcmK1 and CcmK2 were seen.

The protein resides in the carboxysome. In terms of biological role, a probably minor shell protein component of the carboxysome, a polyhedral inclusion where RuBisCO (ribulose bisphosphate carboxylase, rbcL-rbcS) is sequestered. The central pore probably regulates metabolite flux, as might the gaps between assembled homohexamers. Homohexamers make sheets that probably form the facets of the polyhedral carboxysome. This subunit probably makes both homohexamers and heterohexamers with CcmK3. This chain is Carboxysome shell protein CcmK4, found in Synechocystis sp. (strain ATCC 27184 / PCC 6803 / Kazusa).